We begin with the raw amino-acid sequence, 72 residues long: Sec-independent protein translocase protein TatA (72 aa).

The chain crosses the membrane as a helical span at residues 1-21; sequence MGSFSIWHWLIVLAVVLLLFG. Positions 43-72 are disordered; it reads MADEDAKEDPRTIDAKAEEPVKDVKKTTKS. Basic and acidic residues predominate over residues 50-72; the sequence is EDPRTIDAKAEEPVKDVKKTTKS.

This sequence belongs to the TatA/E family. In terms of assembly, the Tat system comprises two distinct complexes: a TatABC complex, containing multiple copies of TatA, TatB and TatC subunits, and a separate TatA complex, containing only TatA subunits. Substrates initially bind to the TatABC complex, which probably triggers association of the separate TatA complex to form the active translocon.

It is found in the cell inner membrane. In terms of biological role, part of the twin-arginine translocation (Tat) system that transports large folded proteins containing a characteristic twin-arginine motif in their signal peptide across membranes. TatA could form the protein-conducting channel of the Tat system. The polypeptide is Sec-independent protein translocase protein TatA (Brucella suis biovar 1 (strain 1330)).